A 271-amino-acid chain; its full sequence is 2-dehydro-3-deoxyphosphooctonate aldolase (271 aa).

Belongs to the KdsA family.

Its subcellular location is the cytoplasm. It catalyses the reaction D-arabinose 5-phosphate + phosphoenolpyruvate + H2O = 3-deoxy-alpha-D-manno-2-octulosonate-8-phosphate + phosphate. It functions in the pathway carbohydrate biosynthesis; 3-deoxy-D-manno-octulosonate biosynthesis; 3-deoxy-D-manno-octulosonate from D-ribulose 5-phosphate: step 2/3. Its pathway is bacterial outer membrane biogenesis; lipopolysaccharide biosynthesis. This chain is 2-dehydro-3-deoxyphosphooctonate aldolase, found in Campylobacter jejuni subsp. jejuni serotype O:2 (strain ATCC 700819 / NCTC 11168).